The sequence spans 194 residues: MKKGEKLEIKLFGKWDSTSVTVKDPSLKSHISLNPVLIPHTAGRNSKKMFDKNKMHVVERLANKLMATQVNTGKKNEVLSIIEEALTIVENRTKENPIQVVVDALENSGPREETTRISYGGIAFLQSVDVSPSRRLDTAFRNISLGASQGAHKSKKSIAQCLADELVAASKADMQKSFAVKKKEEKERVAQSAR.

This sequence belongs to the universal ribosomal protein uS7 family. Part of the 30S ribosomal subunit.

One of the primary rRNA binding proteins, it binds directly to 16S rRNA where it nucleates assembly of the head domain of the 30S subunit. Is located at the subunit interface close to the decoding center. This Methanococcus vannielii (strain ATCC 35089 / DSM 1224 / JCM 13029 / OCM 148 / SB) protein is Small ribosomal subunit protein uS7.